The chain runs to 311 residues: Mycothiol acetyltransferase (311 aa).

Glu35 is a 1D-myo-inositol 2-(L-cysteinylamino)-2-deoxy-alpha-D-glucopyranoside binding site. Position 79–81 (79–81 (LVV)) interacts with acetyl-CoA. The N-acetyltransferase domain occupies 155–311 (VRTYVGTVDD…TAYALARIDD (157 aa)). 3 residues coordinate 1D-myo-inositol 2-(L-cysteinylamino)-2-deoxy-alpha-D-glucopyranoside: Glu180, Lys225, and Glu235. Acetyl-CoA contacts are provided by residues 239–241 (LGV) and 246–252 (QGRGLGQ). Tyr278 contacts 1D-myo-inositol 2-(L-cysteinylamino)-2-deoxy-alpha-D-glucopyranoside. 283–288 (NVAAAR) is an acetyl-CoA binding site.

The protein belongs to the acetyltransferase family. MshD subfamily. In terms of assembly, monomer.

It carries out the reaction 1D-myo-inositol 2-(L-cysteinylamino)-2-deoxy-alpha-D-glucopyranoside + acetyl-CoA = mycothiol + CoA + H(+). Its function is as follows. Catalyzes the transfer of acetyl from acetyl-CoA to desacetylmycothiol (Cys-GlcN-Ins) to form mycothiol. In Mycobacterium leprae (strain Br4923), this protein is Mycothiol acetyltransferase.